We begin with the raw amino-acid sequence, 247 residues long: 2,5-diamino-6-ribosylamino-4(3H)-pyrimidinone 5'-phosphate reductase (247 aa).

Residues Thr75, Asp79, Gly165, and 187–191 contribute to the NADP(+) site; that span reads GASII.

This sequence belongs to the HTP reductase family. In terms of assembly, homodimer.

The catalysed reaction is 2,5-diamino-6-(1-D-ribitylamino)pyrimidin-4(3H)-one 5'-phosphate + NADP(+) = 2,5-diamino-6-(1-D-ribosylamino)pyrimidin-4(3H)-one 5'-phosphate + NADPH + H(+). It catalyses the reaction 2,5-diamino-6-(1-D-ribitylamino)pyrimidin-4(3H)-one 5'-phosphate + NAD(+) = 2,5-diamino-6-(1-D-ribosylamino)pyrimidin-4(3H)-one 5'-phosphate + NADH + H(+). The protein operates within cofactor biosynthesis; riboflavin biosynthesis. In terms of biological role, catalyzes an early step in riboflavin biosynthesis, the NADPH-dependent reduction of the ribose side chain of 2,5-diamino-6-ribosylamino-4(3H)-pyrimidinone 5'-phosphate, yielding 2,5-diamino-6-ribitylamino-4(3H)-pyrimidinone 5'-phosphate. The protein is 2,5-diamino-6-ribosylamino-4(3H)-pyrimidinone 5'-phosphate reductase (RIB7) of Debaryomyces hansenii (strain ATCC 36239 / CBS 767 / BCRC 21394 / JCM 1990 / NBRC 0083 / IGC 2968) (Yeast).